The following is a 325-amino-acid chain: Beta-ketoacyl-[acyl-carrier-protein] synthase III (325 aa).

Residues cysteine 112 and histidine 250 contribute to the active site. Residues 251–255 form an ACP-binding region; that stretch reads QANSR. Asparagine 280 is a catalytic residue.

The protein belongs to the thiolase-like superfamily. FabH family. As to quaternary structure, homodimer.

Its subcellular location is the cytoplasm. It carries out the reaction malonyl-[ACP] + acetyl-CoA + H(+) = 3-oxobutanoyl-[ACP] + CO2 + CoA. It participates in lipid metabolism; fatty acid biosynthesis. Catalyzes the condensation reaction of fatty acid synthesis by the addition to an acyl acceptor of two carbons from malonyl-ACP. Catalyzes the first condensation reaction which initiates fatty acid synthesis and may therefore play a role in governing the total rate of fatty acid production. Possesses both acetoacetyl-ACP synthase and acetyl transacylase activities. Its substrate specificity determines the biosynthesis of branched-chain and/or straight-chain of fatty acids. The polypeptide is Beta-ketoacyl-[acyl-carrier-protein] synthase III (Lactococcus lactis subsp. cremoris (strain SK11)).